The sequence spans 196 residues: Large ribosomal subunit protein bL17 (196 aa).

The segment at 133–196 (AAKRDADKKE…KPAAEEKDAK (64 aa)) is disordered. A compositionally biased stretch (basic and acidic residues) spans 134-143 (AKRDADKKEA). The segment covering 152-164 (EVAETEAAPEAEA) has biased composition (acidic residues). Over residues 184–196 (AAEKPAAEEKDAK) the composition is skewed to basic and acidic residues.

Belongs to the bacterial ribosomal protein bL17 family. As to quaternary structure, part of the 50S ribosomal subunit. Contacts protein L32.

In Arthrobacter sp. (strain FB24), this protein is Large ribosomal subunit protein bL17.